Here is a 158-residue protein sequence, read N- to C-terminus: Small ribosomal subunit protein uS7 (158 aa).

It belongs to the universal ribosomal protein uS7 family. Part of the 30S ribosomal subunit. Contacts proteins S9 and S11.

Its function is as follows. One of the primary rRNA binding proteins, it binds directly to 16S rRNA where it nucleates assembly of the head domain of the 30S subunit. Is located at the subunit interface close to the decoding center, probably blocks exit of the E-site tRNA. This chain is Small ribosomal subunit protein uS7, found in Porphyromonas gingivalis (strain ATCC 33277 / DSM 20709 / CIP 103683 / JCM 12257 / NCTC 11834 / 2561).